A 208-amino-acid polypeptide reads, in one-letter code: Probable GTP-binding protein EngB (208 aa).

The EngB-type G domain occupies 23 to 205 (LTSEMVILGR…RQTLLKYLLT (183 aa)). GTP is bound by residues 31 to 38 (GRSNVGKS), 57 to 61 (GKTRL), 84 to 87 (DLPG), 154 to 157 (TKFD), and 182 to 184 (FNA). Residues S38 and T59 each contribute to the Mg(2+) site.

It belongs to the TRAFAC class TrmE-Era-EngA-EngB-Septin-like GTPase superfamily. EngB GTPase family. Requires Mg(2+) as cofactor.

In terms of biological role, necessary for normal cell division and for the maintenance of normal septation. The sequence is that of Probable GTP-binding protein EngB from Helicobacter pylori (strain J99 / ATCC 700824) (Campylobacter pylori J99).